The following is a 520-amino-acid chain: DNA mismatch repair protein MutL (520 aa).

It belongs to the DNA mismatch repair MutL/HexB family.

Its function is as follows. This protein is involved in the repair of mismatches in DNA. It is required for dam-dependent methyl-directed DNA mismatch repair. May act as a 'molecular matchmaker', a protein that promotes the formation of a stable complex between two or more DNA-binding proteins in an ATP-dependent manner without itself being part of a final effector complex. The chain is DNA mismatch repair protein MutL from Persephonella marina (strain DSM 14350 / EX-H1).